The chain runs to 139 residues: Thioredoxin 2 (139 aa).

A zinc finger lies at cysteine 5–arginine 18. The Thioredoxin domain occupies glycine 26 to leucine 139. Cysteine 64 and cysteine 67 are oxidised to a cystine.

The protein belongs to the thioredoxin family.

Its subcellular location is the cytoplasm. The catalysed reaction is [protein]-dithiol + NAD(+) = [protein]-disulfide + NADH + H(+). It catalyses the reaction [protein]-dithiol + NADP(+) = [protein]-disulfide + NADPH + H(+). Its function is as follows. Efficient electron donor for the essential enzyme ribonucleotide reductase. Is also able to reduce the interchain disulfide bridges of insulin. In Escherichia coli O6:H1 (strain CFT073 / ATCC 700928 / UPEC), this protein is Thioredoxin 2 (trxC).